We begin with the raw amino-acid sequence, 224 residues long: Processed variable antigen (224 aa).

17 tandem repeats follow at residues Glu-1–Lys-6, Glu-7–Lys-12, Glu-13–Lys-18, Glu-19–Lys-24, Glu-25–Lys-30, Glu-31–Lys-36, Glu-37–Lys-42, Glu-43–Lys-48, Glu-49–Lys-54, Glu-55–Lys-60, Glu-61–Lys-66, Glu-67–Lys-72, Glu-73–Lys-78, Glu-79–Lys-84, Glu-85–Lys-90, Glu-91–Lys-96, and Glu-97–Lys-102. The tract at residues Glu-1–Lys-102 is 17 X 6 AA tandem repeats of E-T-G-E-S-K. Over residues Glu-1–Asn-137 the composition is skewed to basic and acidic residues. Positions Glu-1–Lys-224 are disordered. Low complexity predominate over residues Glu-144–Ser-153. Basic and acidic residues-rich tracts occupy residues Glu-156–Gly-173 and Glu-185–Ala-217.

This is Processed variable antigen from Plasmodium falciparum.